The sequence spans 302 residues: Sulfate adenylyltransferase subunit 2 (302 aa).

The protein belongs to the PAPS reductase family. CysD subfamily. Heterodimer composed of CysD, the smaller subunit, and CysN.

It catalyses the reaction sulfate + ATP + H(+) = adenosine 5'-phosphosulfate + diphosphate. Its pathway is sulfur metabolism; hydrogen sulfide biosynthesis; sulfite from sulfate: step 1/3. With CysN forms the ATP sulfurylase (ATPS) that catalyzes the adenylation of sulfate producing adenosine 5'-phosphosulfate (APS) and diphosphate, the first enzymatic step in sulfur assimilation pathway. APS synthesis involves the formation of a high-energy phosphoric-sulfuric acid anhydride bond driven by GTP hydrolysis by CysN coupled to ATP hydrolysis by CysD. The polypeptide is Sulfate adenylyltransferase subunit 2 (Salmonella agona (strain SL483)).